The sequence spans 624 residues: Cilia- and flagella-associated protein 206 (624 aa).

This sequence belongs to the CFAP206 family.

Its subcellular location is the cytoplasm. The protein localises to the cytoskeleton. It is found in the cilium axoneme. It localises to the cilium basal body. Essential for sperm motility and is involved in the regulation of the beating frequency of motile cilia on the epithelial cells of the respiratory tract. Required for the establishment of radial spokes in sperm flagella. This is Cilia- and flagella-associated protein 206 (cfap206) from Danio rerio (Zebrafish).